We begin with the raw amino-acid sequence, 287 residues long: MAITAAASRLGTSAFSDAPPVELRANWSEEDLETVIRAVYRQVLGNDYVMASERLVSAESLLRNGKITVREFVRAVAKSELYKEKFLYGNFQTRVIELNYKHLLGRAPYDESEVIFHLDLYENEGFDADIDSYIDSPEYTNSFGDWVVPYYRGFNTQPGQKTVGFNRIFRLYRGYANSDRAQAEGSMSRLARDLATNRANTVVPPSNSDTAFAYYTPSADVPPRACLGGSFGESGRVYRIEVAGIRQPGYPGVRRSSTAFLVPYEQLSAKMQQLQRTGARIISVNPA.

Residues 2 to 180 (AITAAASRLG…LYRGYANSDR (179 aa)) form the PBS-linker domain. In terms of domain architecture, CpcD-like spans 235–287 (GRVYRIEVAGIRQPGYPGVRRSSTAFLVPYEQLSAKMQQLQRTGARIISVNPA).

Belongs to the phycobilisome linker protein family.

It localises to the cellular thylakoid membrane. Functionally, rod linker protein, associated with phycocyanin. Linker polypeptides determine the state of aggregation and the location of the disk-shaped phycobiliprotein units within the phycobilisome and modulate their spectroscopic properties in order to mediate a directed and optimal energy transfer. In Thermosynechococcus vestitus (strain NIES-2133 / IAM M-273 / BP-1), this protein is Phycobilisome 32.1 kDa linker polypeptide, phycocyanin-associated, rod (cpcC).